We begin with the raw amino-acid sequence, 481 residues long: Pentatricopeptide repeat-containing protein At2g48000 (481 aa).

9 PPR repeats span residues 147–181 (TTSV…QDGP), 187–221 (SVST…NILP), 222–256 (DSST…LVKP), 257–287 (TLAT…VKRH), 292–324 (EIKL…LIPK), 328–362 (KPWL…GLQI), 364–398 (TDGI…GWKM), 399–433 (SRSM…KISR), and 434–469 (SKKT…GHDF).

The protein belongs to the PPR family. P subfamily.

This chain is Pentatricopeptide repeat-containing protein At2g48000, found in Arabidopsis thaliana (Mouse-ear cress).